Here is a 543-residue protein sequence, read N- to C-terminus: Bifunctional riboflavin biosynthesis protein RIBA 1, chloroplastic (543 aa).

Residues 1–56 (MSSINLSSSSPSTISLSRSRLSQSSTTLLHGLHRVTLPSNHPLSTFSIKTNTGKVK) constitute a chloroplast transit peptide. Residues 57 to 328 (AAVISREDDL…IADLIRYRRK (272 aa)) are DHBP synthase. D-ribulose 5-phosphate-binding positions include 152–153 (RE), Asp157, 267–271 (RAGHT), and Glu291. Glu153 is a binding site for Mg(2+). Residue His270 coordinates Mg(2+). The interval 329-543 (RDKLVERASA…VEKIESESES (215 aa)) is GTP cyclohydrolase II. 379–383 (RVHSE) lines the GTP pocket. Zn(2+) is bound by residues Cys384, Cys395, and Cys397. Residues Gln400, 423 to 425 (EGR), and Thr445 contribute to the GTP site. Asp457 acts as the Proton acceptor; for GTP cyclohydrolase activity in catalysis. Arg459 functions as the Nucleophile; for GTP cyclohydrolase activity in the catalytic mechanism. Residues Thr480 and Lys485 each contribute to the GTP site.

It in the N-terminal section; belongs to the DHBP synthase family. This sequence in the C-terminal section; belongs to the GTP cyclohydrolase II family. Requires Mg(2+) as cofactor. Mn(2+) serves as cofactor. The cofactor is Zn(2+). In terms of tissue distribution, expressed in leaves, shoots, roots, flowers and siliques.

It localises to the plastid. The protein resides in the chloroplast. The enzyme catalyses D-ribulose 5-phosphate = (2S)-2-hydroxy-3-oxobutyl phosphate + formate + H(+). It catalyses the reaction GTP + 4 H2O = 2,5-diamino-6-hydroxy-4-(5-phosphoribosylamino)-pyrimidine + formate + 2 phosphate + 3 H(+). The protein operates within cofactor biosynthesis; riboflavin biosynthesis; 2-hydroxy-3-oxobutyl phosphate from D-ribulose 5-phosphate: step 1/1. Its pathway is cofactor biosynthesis; riboflavin biosynthesis; 5-amino-6-(D-ribitylamino)uracil from GTP: step 1/4. Its function is as follows. Involved in riboflavin biosynthesis. Catalyzes both the conversion of D-ribulose 5-phosphate to formate and 3,4-dihydroxy-2-butanone 4-phosphate and the conversion of GTP to 2,5-diamino-6-ribosylamino-4(3H)-pyrimidinone 5'-phosphate (DARP), formate and pyrophosphate. RIBA2 and RIBA3 together are not able to complement the loss of function of RIBA1. This is Bifunctional riboflavin biosynthesis protein RIBA 1, chloroplastic (RIBA1) from Arabidopsis thaliana (Mouse-ear cress).